The chain runs to 516 residues: Probable inorganic phosphate transporter 1-6 (516 aa).

N-acetylalanine is present on Ala2. Residues 2 to 25 (ANEEQGSILKALDVAKTQWYHVTA) lie on the Cytoplasmic side of the membrane. Residues 26 to 46 (VVVSGMGFFTDSYDLFVISLI) form a helical membrane-spanning segment. The Extracellular segment spans residues 47–71 (TKLLGRIYYQVPGSSSPGSLPDGIS). Residues 72 to 92 (AAVSGVAFAGTFIGQIFFGCL) traverse the membrane as a helical segment. The Cytoplasmic segment spans residues 93–100 (GDKLGRKR). The helical transmembrane segment at 101–121 (VYGLTLLIMTICSICSGLSLG) threads the bilayer. At 122-132 (RDPKTVMVTLC) the chain is on the extracellular side. A helical membrane pass occupies residues 133–153 (FFRFWLGFGIGGDYPLSATIM). Residues 154–162 (SEYSNKRTR) lie on the Cytoplasmic side of the membrane. The chain crosses the membrane as a helical span at residues 163–183 (GAFIAAVFGMQGIGILAAGAV). At 184-212 (SLLVSAVFESKFPSRAYILDGAASTVPQA) the chain is on the extracellular side. Residues 213-233 (DYVWRIILMVGALPALLTYYW) form a helical membrane-spanning segment. The Cytoplasmic portion of the chain corresponds to 234–293 (RMKMPETARYTALVSKNAEQAALDMTKVLNVDIEASAAKNDQARVSSDEFGLFSMKFLRR). The chain crosses the membrane as a helical span at residues 294-314 (HGLHLLGTASTWFLLDIAFYS). Over 315-349 (QNLFQKDIFTTIGWLPSAKTMNAIQELYMIAKAQT) the chain is Extracellular. Residues 350-370 (IIACCSTVPGYFFTVGFIDYM) traverse the membrane as a helical segment. At 371 to 374 (GRKK) the chain is on the cytoplasmic side. Residues 375-395 (IQIMGFAMMTIFMLSLAIPYH) traverse the membrane as a helical segment. Residues 396-403 (HWTLPANR) are Extracellular-facing. A helical membrane pass occupies residues 404–424 (IGFVVLYSFTFFFSNFGPNAT). Topologically, residues 425 to 442 (TFIVPAEIFPARIRSTCH) are cytoplasmic. The helical transmembrane segment at 443-463 (GISAASGKAGAMVGSFGFSAL) threads the bilayer. Residues 464-471 (VKALGMSN) are Extracellular-facing. The helical transmembrane segment at 472-492 (TLYIMAGINLLGLLLTFTIPE) threads the bilayer. The Cytoplasmic portion of the chain corresponds to 493–516 (TNGKSLEELSGETEPEKIKEKIVV).

It belongs to the major facilitator superfamily. Phosphate:H(+) symporter (TC 2.A.1.9) family. In terms of tissue distribution, expressed in anthers, tapetumand mature pollen and, to a lower extent, in hydathodes and vascular tissues of cotyledons of flowering plants.

The protein localises to the membrane. In terms of biological role, high-affinity transporter for external inorganic phosphate. The protein is Probable inorganic phosphate transporter 1-6 (PHT1-6) of Arabidopsis thaliana (Mouse-ear cress).